Consider the following 195-residue polypeptide: dCTP deaminase (195 aa).

Residues 105–110, Asp123, 131–133, Gln152, Tyr166, Lys173, and Gln177 each bind dCTP; these read RSSLGR and TLE. Catalysis depends on Glu133, which acts as the Proton donor/acceptor. Residues 159–195 form a disordered region; the sequence is KTPADRPYGAERGSKYQGQSGPQASKIQGDREFGGDQ. Basic and acidic residues predominate over residues 160–172; it reads TPADRPYGAERGS. A compositionally biased stretch (polar residues) spans 174–184; that stretch reads YQGQSGPQASK. Positions 186–195 are enriched in basic and acidic residues; that stretch reads QGDREFGGDQ.

The protein belongs to the dCTP deaminase family. As to quaternary structure, homotrimer.

The enzyme catalyses dCTP + H2O + H(+) = dUTP + NH4(+). The protein operates within pyrimidine metabolism; dUMP biosynthesis; dUMP from dCTP (dUTP route): step 1/2. In terms of biological role, catalyzes the deamination of dCTP to dUTP. This is dCTP deaminase from Haloarcula marismortui (strain ATCC 43049 / DSM 3752 / JCM 8966 / VKM B-1809) (Halobacterium marismortui).